Reading from the N-terminus, the 1787-residue chain is ATP-dependent RNA helicase DEAH11, chloroplastic (1787 aa).

The transit peptide at 1-33 (MRNSFPPSDGGRSTTDRRQQSFPSSSTNRYNSR) directs the protein to the chloroplast. The disordered stretch occupies residues 1-75 (MRNSFPPSDG…DRAPSSGFSP (75 aa)). A compositionally biased stretch (polar residues) spans 20 to 60 (QSFPSSSTNRYNSRSAQSSPPLNHCTTWNQQHSQYHNTNFP). The Helicase ATP-binding domain occupies 313 to 477 (LKKIHCEQIM…LFDCGILHVN (165 aa)). Position 326 to 333 (326 to 333 (GETGSGKS)) interacts with ATP. A DEAH box motif is present at residues 424–427 (DEAH). The Helicase C-terminal domain occupies 507–673 (DVVKMAVEIH…VALLRMLALG (167 aa)). The segment at 1557–1764 (IELECPICLS…EPCYAHLRTI (208 aa)) is TRIAD supradomain. The Zn(2+) site is built by Cys1561, Cys1564, Cys1577, His1579, Cys1582, Cys1585, Cys1604, Cys1609, Cys1649, Cys1654, Cys1672, Cys1675, Cys1680, Cys1683, His1688, Cys1693, Cys1719, and Cys1722. An RING-type 1 zinc finger spans residues 1561–1609 (CPICLSEVDDGYSLEGCSHLFCKACLLEQFEASMRNFDAFPILCSHIDC). The IBR-type zinc-finger motif lies at 1628-1693 (DELISASLSA…HLEYHPLITC (66 aa)). The RING-type 2; atypical zinc-finger motif lies at 1719-1747 (CPICKSTIEKTDGCNHLQCRCGKHICWTC). Cys1732 is an active-site residue. Zn(2+) contacts are provided by Cys1737 and Cys1739.

Belongs to the DEAD box helicase family. DEAH subfamily.

It is found in the plastid. The protein localises to the chloroplast. The enzyme catalyses ATP + H2O = ADP + phosphate + H(+). The polypeptide is ATP-dependent RNA helicase DEAH11, chloroplastic (Arabidopsis thaliana (Mouse-ear cress)).